The primary structure comprises 332 residues: L-lactate dehydrogenase A chain (332 aa).

NAD(+) contacts are provided by residues 29 to 57 (GMVG…MEDK) and R99. Substrate contacts are provided by R106, N138, and R169. N138 provides a ligand contact to NAD(+). H193 functions as the Proton acceptor in the catalytic mechanism. T248 is a substrate binding site.

Belongs to the LDH/MDH superfamily. LDH family. In terms of assembly, homotetramer.

Its subcellular location is the cytoplasm. It catalyses the reaction (S)-lactate + NAD(+) = pyruvate + NADH + H(+). Its pathway is fermentation; pyruvate fermentation to lactate; (S)-lactate from pyruvate: step 1/1. Its function is as follows. Interconverts simultaneously and stereospecifically pyruvate and lactate with concomitant interconversion of NADH and NAD(+). This is L-lactate dehydrogenase A chain (ldha) from Fundulus heteroclitus (Killifish).